Here is a 213-residue protein sequence, read N- to C-terminus: Pyrrolidone-carboxylate peptidase (213 aa).

Catalysis depends on residues glutamate 78, cysteine 141, and histidine 165.

This sequence belongs to the peptidase C15 family. Homotetramer.

Its subcellular location is the cytoplasm. The enzyme catalyses Release of an N-terminal pyroglutamyl group from a polypeptide, the second amino acid generally not being Pro.. Its function is as follows. Removes 5-oxoproline from various penultimate amino acid residues except L-proline. The chain is Pyrrolidone-carboxylate peptidase from Finegoldia magna (strain ATCC 29328 / DSM 20472 / WAL 2508) (Peptostreptococcus magnus).